An 887-amino-acid polypeptide reads, in one-letter code: Phosphatidylinositol 3-kinase catalytic subunit type 3 (887 aa).

The C2 PI3K-type domain occupies 35–184 (YKAVLEDPML…LAKLTKAHRQ (150 aa)). The tract at residues 149–170 (VEADGSEPTRTPGRTSSTLSED) is disordered. Positions 156-170 (PTRTPGRTSSTLSED) are enriched in polar residues. Threonine 163 is modified (phosphothreonine; by AMPK). Serine 165 is subject to Phosphoserine; by AMPK. 3 positions are modified to phosphoserine: serine 244, serine 261, and serine 282. In terms of domain architecture, PIK helical spans 283 to 520 (DHDLKPNATT…PKTHEMYLNV (238 aa)). A disordered region spans residues 415–466 (LEPTKKDSQTSASESLSNSGVSSGDIDSSQIITNPLPPVASPPPASKAKEVS). Residues 425 to 437 (SASESLSNSGVSS) are compositionally biased toward low complexity. Pro residues predominate over residues 449–459 (PLPPVASPPPA). Positions 605-871 (IPETATLFKS…LIDESVHALF (267 aa)) constitute a PI3K/PI4K catalytic domain. Residues 611–617 (LFKSALM) form a G-loop region. Positions 740-748 (GVGDRHLDN) are catalytic loop. The tract at residues 759-780 (HIDFGYILGRDPKPLPPPMKLN) is activation loop.

The protein belongs to the PI3/PI4-kinase family. Component of the PI3K (PI3KC3/PI3K-III/class III phosphatidylinositol 3-kinase) complex the core of which is composed of the catalytic subunit PIK3C3, the regulatory subunit PIK3R4 and BECN1 associating with additional regulatory/auxiliary subunits to form alternative complex forms. Alternative complex forms containing a fourth regulatory subunit in a mutually exclusive manner are: the PI3K complex I (PI3KC3-C1) containing ATG14, and the PI3K complex II (PI3KC3-C2) containing UVRAG. PI3KC3-C1 displays a V-shaped architecture with PIK3R4 serving as a bridge between PIK3C3 and the ATG14:BECN1 subcomplex. Both, PI3KC3-C1 and PI3KC3-C2, can associate with further regulatory subunits such as RUBCN, SH3GLB1/Bif-1 and AMBRA1. PI3KC3-C1 probably associates with PIK3CB. Interacts with RAB7A in the presence of PIK3R4. Interacts with AMBRA1. Interacts with BECN1P1/BECN2. Interacts with SLAMF1. May be a component of a complex composed of RAB5A (in GDP-bound form), DYN2 and PIK3C3. Interacts with NCKAP1L. Interacts with ATG14; this interaction is increased in the absence of TMEM39A. Interacts with STEEP1; the interaction is STING1-dependent and required for trafficking of STING1 from the endoplasmic reticulum. Interacts with YWHAG. Interacts with ARMC3. Requires Mn(2+) as cofactor. Post-translationally, ubiquitinated via 'Lys-29'- and 'Lys-48'-linked ubiquitination by UBE3C, promoting its degradation. Deubiquitination by ZRANB1/TRABID promotes its stabilization, leading to autophagosome maturation.

The protein localises to the midbody. It is found in the late endosome. The protein resides in the cytoplasmic vesicle. Its subcellular location is the autophagosome. It carries out the reaction a 1,2-diacyl-sn-glycero-3-phospho-(1D-myo-inositol) + ATP = a 1,2-diacyl-sn-glycero-3-phospho-(1D-myo-inositol-3-phosphate) + ADP + H(+). Its function is as follows. Catalytic subunit of the PI3K complex that mediates formation of phosphatidylinositol 3-phosphate; different complex forms are believed to play a role in multiple membrane trafficking pathways: PI3KC3-C1 is involved in initiation of autophagosomes and PI3KC3-C2 in maturation of autophagosomes and endocytosis. As part of PI3KC3-C1, promotes endoplasmic reticulum membrane curvature formation prior to vesicle budding. Involved in regulation of degradative endocytic trafficking and required for the abscission step in cytokinesis, probably in the context of PI3KC3-C2. Involved in the transport of lysosomal enzyme precursors to lysosomes. Required for transport from early to late endosomes. The protein is Phosphatidylinositol 3-kinase catalytic subunit type 3 of Mus musculus (Mouse).